Reading from the N-terminus, the 118-residue chain is Large ribosomal subunit protein bL20 (118 aa).

This sequence belongs to the bacterial ribosomal protein bL20 family.

In terms of biological role, binds directly to 23S ribosomal RNA and is necessary for the in vitro assembly process of the 50S ribosomal subunit. It is not involved in the protein synthesizing functions of that subunit. This is Large ribosomal subunit protein bL20 from Sulfurovum sp. (strain NBC37-1).